The sequence spans 140 residues: MLKTIKKIIKLQIKGGLANPAPPIGPALGSAGVNIMDFCKQYNFSTQKSKGKLLPVIITIYNDKSFSFIIKEPPVSKQLLELCKLDKGSKESNKIKVGKITLAKIESIAKNKIIDMNCFNIKSAISMVAGTARSMGIEIL.

Belongs to the universal ribosomal protein uL11 family. As to quaternary structure, part of the ribosomal stalk of the 50S ribosomal subunit. Interacts with L10 and the large rRNA to form the base of the stalk. L10 forms an elongated spine to which L12 dimers bind in a sequential fashion forming a multimeric L10(L12)X complex. In terms of processing, one or more lysine residues are methylated.

In terms of biological role, forms part of the ribosomal stalk which helps the ribosome interact with GTP-bound translation factors. The protein is Large ribosomal subunit protein uL11 of Karelsulcia muelleri (strain GWSS) (Sulcia muelleri).